A 312-amino-acid chain; its full sequence is sn-1-specific diacylglycerol lipase ABHD11 (312 aa).

Residues 1-14 (MITFKSFHCSRGWH) constitute a mitochondrion transit peptide. The AB hydrolase-1 domain occupies 62–297 (PPLVLLHGLF…GAGHWVHADK (236 aa)). Residues serine 136, glutamate 232, and histidine 291 each act as charge relay system in the active site.

It belongs to the AB hydrolase superfamily. In terms of processing, phosphorylated.

The protein resides in the mitochondrion. It is found in the mitochondrion matrix. The enzyme catalyses 1-octadecanoyl-2-(5Z,8Z,11Z,14Z-eicosatetraenoyl)-sn-glycerol + H2O = 2-(5Z,8Z,11Z,14Z-eicosatetraenoyl)-glycerol + octadecanoate + H(+). It carries out the reaction a 1,2-diacyl-sn-glycerol + H2O = a 2-acylglycerol + a fatty acid + H(+). The catalysed reaction is a 1,3-diacyl-sn-glycerol + H2O = a 1-acyl-sn-glycerol + a fatty acid + H(+). It catalyses the reaction 1-octadecanoyl-2-(9Z-octadecenoyl)-sn-glycerol + H2O = 2-(9Z-octadecenoyl)-glycerol + octadecanoate + H(+). The enzyme catalyses 1-octadecanoyl-2-(4Z,7Z,10Z,13Z,16Z,19Z-docosahexaenoyl)-sn-glycerol + H2O = 2-(4Z,7Z,10Z,13Z,16Z,19Z-docosahexaenoyl)-glycerol + octadecanoate + H(+). It carries out the reaction 1,2-didecanoylglycerol + H2O = decanoylglycerol + decanoate + H(+). Catalyzes the hydrolysis of diacylglycerol in vitro and may function as a key regulator in lipid metabolism, namely by regulating the intracellular levels of diacylglycerol. 1,2-diacyl-sn-glycerols are the preferred substrate over 1,3-diacyl-sn-glycerols. The enzyme hydrolyzes stearate in preference to palmitate from the sn-1 position of 1,2-diacyl-sn-glycerols. This is sn-1-specific diacylglycerol lipase ABHD11 from Xenopus laevis (African clawed frog).